We begin with the raw amino-acid sequence, 284 residues long: Acetylglutamate kinase (284 aa).

Substrate is bound by residues 64–65, Arg-86, and Asn-181; that span reads GG.

It belongs to the acetylglutamate kinase family. ArgB subfamily.

The protein localises to the cytoplasm. The enzyme catalyses N-acetyl-L-glutamate + ATP = N-acetyl-L-glutamyl 5-phosphate + ADP. Its pathway is amino-acid biosynthesis; L-arginine biosynthesis; N(2)-acetyl-L-ornithine from L-glutamate: step 2/4. Functionally, catalyzes the ATP-dependent phosphorylation of N-acetyl-L-glutamate. The polypeptide is Acetylglutamate kinase (Wolinella succinogenes (strain ATCC 29543 / DSM 1740 / CCUG 13145 / JCM 31913 / LMG 7466 / NCTC 11488 / FDC 602W) (Vibrio succinogenes)).